The sequence spans 204 residues: Octanoyltransferase (204 aa).

The region spanning 30–204 (CETPDEIWLL…QSFINQLTDV (175 aa)) is the BPL/LPL catalytic domain. Substrate is bound by residues 69–76 (RGGQITYH), 136–138 (SLG), and 149–151 (GIA). Cysteine 167 (acyl-thioester intermediate) is an active-site residue.

This sequence belongs to the LipB family.

Its subcellular location is the cytoplasm. The enzyme catalyses octanoyl-[ACP] + L-lysyl-[protein] = N(6)-octanoyl-L-lysyl-[protein] + holo-[ACP] + H(+). The protein operates within protein modification; protein lipoylation via endogenous pathway; protein N(6)-(lipoyl)lysine from octanoyl-[acyl-carrier-protein]: step 1/2. Functionally, catalyzes the transfer of endogenously produced octanoic acid from octanoyl-acyl-carrier-protein onto the lipoyl domains of lipoate-dependent enzymes. Lipoyl-ACP can also act as a substrate although octanoyl-ACP is likely to be the physiological substrate. This Nitrosomonas europaea (strain ATCC 19718 / CIP 103999 / KCTC 2705 / NBRC 14298) protein is Octanoyltransferase.